The sequence spans 160 residues: SsrA-binding protein (160 aa).

This sequence belongs to the SmpB family.

The protein localises to the cytoplasm. Required for rescue of stalled ribosomes mediated by trans-translation. Binds to transfer-messenger RNA (tmRNA), required for stable association of tmRNA with ribosomes. tmRNA and SmpB together mimic tRNA shape, replacing the anticodon stem-loop with SmpB. tmRNA is encoded by the ssrA gene; the 2 termini fold to resemble tRNA(Ala) and it encodes a 'tag peptide', a short internal open reading frame. During trans-translation Ala-aminoacylated tmRNA acts like a tRNA, entering the A-site of stalled ribosomes, displacing the stalled mRNA. The ribosome then switches to translate the ORF on the tmRNA; the nascent peptide is terminated with the 'tag peptide' encoded by the tmRNA and targeted for degradation. The ribosome is freed to recommence translation, which seems to be the essential function of trans-translation. The protein is SsrA-binding protein of Histophilus somni (strain 129Pt) (Haemophilus somnus).